The chain runs to 284 residues: Tropomyosin (284 aa).

The tract at residues M1–E54 is disordered. Positions M1–E273 form a coiled coil. Positions K12 to A45 are enriched in basic and acidic residues.

It belongs to the tropomyosin family. Homodimer. In terms of tissue distribution, muscle (at protein level). Expressed in leg and chest protection muscle (at protein level). Expressed in claw muscle.

Tropomyosin, in association with the troponin complex, plays a central role in the calcium dependent regulation of muscle contraction. The protein is Tropomyosin of Eriocheir sinensis (Chinese mitten crab).